A 123-amino-acid polypeptide reads, in one-letter code: Thioredoxin domain-containing protein 17 (123 aa).

Ala2 carries the post-translational modification N-acetylalanine. The region spanning 41 to 123 is the Thioredoxin domain; it reads SWCPDCVEAE…SLVEMIFSED (83 aa). Residues Cys43 and Cys46 each act as nucleophile in the active site. Cys43 and Cys46 are disulfide-bonded.

It belongs to the thioredoxin family. As to quaternary structure, interacts with TRXR1 and DYNLL1/DNCL1. In terms of processing, the oxidized protein is reduced by TRXR1.

It localises to the cytoplasm. Functionally, disulfide reductase. May participate in various redox reactions through the reversible oxidation of its active center dithiol to a disulfide and catalyze dithiol-disulfide exchange reactions. Modulates TNF-alpha signaling and NF-kappa-B activation. Has peroxidase activity and may contribute to the elimination of cellular hydrogen peroxide. The protein is Thioredoxin domain-containing protein 17 (Txndc17) of Mus musculus (Mouse).